The sequence spans 470 residues: Ribosomal protein uS12 methylthiotransferase RimO (470 aa).

Residues 33–143 (NKIGFVSLGC…VLEHVHQYAP (111 aa)) enclose the MTTase N-terminal domain. [4Fe-4S] cluster-binding residues include Cys42, Cys78, Cys107, Cys175, Cys179, and Cys182. One can recognise a Radical SAM core domain in the interval 161 to 398 (LTPKHYAYLK…MLVQQEISAA (238 aa)). A TRAM domain is found at 401 to 467 (QKRIGSTMQV…EYDLWGSVLH (67 aa)).

It belongs to the methylthiotransferase family. RimO subfamily. Requires [4Fe-4S] cluster as cofactor.

It localises to the cytoplasm. The enzyme catalyses L-aspartate(89)-[ribosomal protein uS12]-hydrogen + (sulfur carrier)-SH + AH2 + 2 S-adenosyl-L-methionine = 3-methylsulfanyl-L-aspartate(89)-[ribosomal protein uS12]-hydrogen + (sulfur carrier)-H + 5'-deoxyadenosine + L-methionine + A + S-adenosyl-L-homocysteine + 2 H(+). Functionally, catalyzes the methylthiolation of an aspartic acid residue of ribosomal protein uS12. This Vibrio cholerae serotype O1 (strain ATCC 39541 / Classical Ogawa 395 / O395) protein is Ribosomal protein uS12 methylthiotransferase RimO.